Consider the following 329-residue polypeptide: GTP 3',8-cyclase (329 aa).

Positions 8–234 (AFARKFYYLR…QIRQRSDGPA (227 aa)) constitute a Radical SAM core domain. Residue Arg17 coordinates GTP. [4Fe-4S] cluster is bound by residues Cys24 and Cys28. Tyr30 serves as a coordination point for S-adenosyl-L-methionine. A [4Fe-4S] cluster-binding site is contributed by Cys31. Residue Arg68 coordinates GTP. Residue Gly72 coordinates S-adenosyl-L-methionine. Residue Thr99 coordinates GTP. S-adenosyl-L-methionine is bound at residue Ser123. Lys160 contributes to the GTP binding site. Residue Met194 coordinates S-adenosyl-L-methionine. Residues Cys257 and Cys260 each contribute to the [4Fe-4S] cluster site. 262–264 (RLR) contacts GTP. Cys274 lines the [4Fe-4S] cluster pocket.

Belongs to the radical SAM superfamily. MoaA family. As to quaternary structure, monomer and homodimer. It depends on [4Fe-4S] cluster as a cofactor.

It catalyses the reaction GTP + AH2 + S-adenosyl-L-methionine = (8S)-3',8-cyclo-7,8-dihydroguanosine 5'-triphosphate + 5'-deoxyadenosine + L-methionine + A + H(+). The protein operates within cofactor biosynthesis; molybdopterin biosynthesis. Functionally, catalyzes the cyclization of GTP to (8S)-3',8-cyclo-7,8-dihydroguanosine 5'-triphosphate. The sequence is that of GTP 3',8-cyclase from Klebsiella pneumoniae subsp. pneumoniae (strain ATCC 700721 / MGH 78578).